The following is a 2291-amino-acid chain: Protein Ycf2 B (2291 aa).

1642–1649 contributes to the ATP binding site; that stretch reads GSIGTGRS.

Belongs to the Ycf2 family.

It is found in the plastid. The protein resides in the chloroplast stroma. In terms of biological role, probable ATPase of unknown function. Its presence in a non-photosynthetic plant (Epifagus virginiana) and experiments in tobacco indicate that it has an essential function which is probably not related to photosynthesis. This is Protein Ycf2 B (ycf2-B) from Atropa belladonna (Belladonna).